Consider the following 375-residue polypeptide: DNA replication and repair protein RecF (375 aa).

30–37 (GNNAQGKS) is an ATP binding site.

This sequence belongs to the RecF family.

It is found in the cytoplasm. The RecF protein is involved in DNA metabolism; it is required for DNA replication and normal SOS inducibility. RecF binds preferentially to single-stranded, linear DNA. It also seems to bind ATP. This chain is DNA replication and repair protein RecF, found in Microcystis aeruginosa (strain NIES-843 / IAM M-2473).